The following is a 360-amino-acid chain: Protein Wnt-5b (360 aa).

An N-terminal signal peptide occupies residues 1 to 16; it reads MTPILRLLLLSSLLSC. A disulfide bond links C84 and C95. N94 and N100 each carry an N-linked (GlcNAc...) asparagine glycan. Disulfide bonds link C134/C142, C144/C162, C218/C232, C220/C227, C289/C320, C305/C315, C319/C359, C335/C350, C337/C347, and C342/C343. The O-palmitoleoyl serine; by PORCN moiety is linked to residue S224. N292 and N306 each carry an N-linked (GlcNAc...) asparagine glycan.

Belongs to the Wnt family. In terms of processing, palmitoleoylation is required for efficient binding to frizzled receptors. Depalmitoleoylation leads to Wnt signaling pathway inhibition.

The protein resides in the secreted. It is found in the extracellular space. Its subcellular location is the extracellular matrix. Ligand for members of the frizzled family of seven transmembrane receptors. Probable developmental protein. May be a signaling molecule which affects the development of discrete regions of tissues. Is likely to signal over only few cell diameters. In Xenopus laevis (African clawed frog), this protein is Protein Wnt-5b (wnt5b).